Consider the following 217-residue polypeptide: Adenylate kinase (217 aa).

ATP is bound at residue 10–15 (GAGKGT). Positions 30–59 (STGDMLRAAVKAGTPLGIEAKKVMDAGGLV) are NMP. Residues T31, R36, 57-59 (GLV), 85-88 (GFPR), and Q92 each bind AMP. Positions 122–159 (GRRAHLASGRTYHVKYNPPKVEGKDDVTGEDLVQRDDD) are LID. ATP contacts are provided by residues R123 and 132–133 (TY). The AMP site is built by R156 and R167. G203 contributes to the ATP binding site.

This sequence belongs to the adenylate kinase family. Monomer.

It is found in the cytoplasm. The catalysed reaction is AMP + ATP = 2 ADP. Its pathway is purine metabolism; AMP biosynthesis via salvage pathway; AMP from ADP: step 1/1. Functionally, catalyzes the reversible transfer of the terminal phosphate group between ATP and AMP. Plays an important role in cellular energy homeostasis and in adenine nucleotide metabolism. The polypeptide is Adenylate kinase (Azoarcus sp. (strain BH72)).